The chain runs to 393 residues: MSDHVKITPMTLNFGPQHPAAHGVMRLVLEMGGEVIERIDPHIGLLHRGTEKLIEYKTYLQALPYFDRLDYVSPMAQEHAYSLCVEKLLKCEVPIRAKYLRVIFCELTRILNHLLNISSQALDIGAMTPLLWMFEEREKILNFYERASGARFHSAYIRPGGVAADIPEDLIHDIFQFVNTFPKFMDDVDSLLTENRIWKQRNVDIGVVSKKQALNWGFSGPMLRACGIPWDLRKSQPYEIYDELEFKIPIGEKGDCYDRYLVRMAEIRESISLVEQCLNRIPDGPVKTDDRKIAPPKRSEMKKSMEALIHHFKLYSEGYIVPAGETYMAVEAPKGEFGVYIVSDGTNKPYRCRIRAPGFAHLQAIDMMAKGHMLADLTAIIGSLDIVFGEIDR.

This sequence belongs to the complex I 49 kDa subunit family. As to quaternary structure, NDH-1 is composed of 14 different subunits. Subunits NuoB, C, D, E, F, and G constitute the peripheral sector of the complex.

It localises to the cell inner membrane. It carries out the reaction a quinone + NADH + 5 H(+)(in) = a quinol + NAD(+) + 4 H(+)(out). Its function is as follows. NDH-1 shuttles electrons from NADH, via FMN and iron-sulfur (Fe-S) centers, to quinones in the respiratory chain. The immediate electron acceptor for the enzyme in this species is believed to be ubiquinone. Couples the redox reaction to proton translocation (for every two electrons transferred, four hydrogen ions are translocated across the cytoplasmic membrane), and thus conserves the redox energy in a proton gradient. The chain is NADH-quinone oxidoreductase subunit D from Ehrlichia ruminantium (strain Gardel).